The sequence spans 245 residues: tRNA pseudouridine synthase A (245 aa).

The active-site Nucleophile is Asp-52. A substrate-binding site is contributed by Tyr-111.

It belongs to the tRNA pseudouridine synthase TruA family. In terms of assembly, homodimer.

The enzyme catalyses uridine(38/39/40) in tRNA = pseudouridine(38/39/40) in tRNA. Its function is as follows. Formation of pseudouridine at positions 38, 39 and 40 in the anticodon stem and loop of transfer RNAs. In Rhodopseudomonas palustris (strain BisB18), this protein is tRNA pseudouridine synthase A.